The chain runs to 398 residues: LL-diaminopimelate aminotransferase (398 aa).

The substrate site is built by Y14 and G41. Residues Y71, A104–K105, Y128, N174, Y205, and S233–S235 each bind pyridoxal 5'-phosphate. Positions 105, 128, and 174 each coordinate substrate. Position 236 is an N6-(pyridoxal phosphate)lysine (K236). R244 and N275 together coordinate pyridoxal 5'-phosphate. Positions 275 and 368 each coordinate substrate.

The protein belongs to the class-I pyridoxal-phosphate-dependent aminotransferase family. LL-diaminopimelate aminotransferase subfamily. Homodimer. The cofactor is pyridoxal 5'-phosphate.

The catalysed reaction is (2S,6S)-2,6-diaminopimelate + 2-oxoglutarate = (S)-2,3,4,5-tetrahydrodipicolinate + L-glutamate + H2O + H(+). It functions in the pathway amino-acid biosynthesis; L-lysine biosynthesis via DAP pathway; LL-2,6-diaminopimelate from (S)-tetrahydrodipicolinate (aminotransferase route): step 1/1. Functionally, involved in the synthesis of meso-diaminopimelate (m-DAP or DL-DAP), required for both lysine and peptidoglycan biosynthesis. Catalyzes the direct conversion of tetrahydrodipicolinate to LL-diaminopimelate. This is LL-diaminopimelate aminotransferase from Chlamydia felis (strain Fe/C-56) (Chlamydophila felis).